The sequence spans 411 residues: Bifunctional protein GlmU (411 aa).

Residues 1 to 204 form a pyrophosphorylase region; sequence MDAIILCAGK…IGKLHGVELN (204 aa). UTP is bound by residues 6-9, Gln-74, and Gly-79; that span reads LCAG. N-acetyl-alpha-D-glucosamine 1-phosphate-binding residues include Thr-80, Gly-130, Asn-142, and Asn-158. Positions 205–224 are linker; sequence GYWNDIGHPWDVLSANSHFL. An N-acetyltransferase region spans residues 225 to 411; it reads NKIISKISGK…DELVITKKRN (187 aa). His-308 functions as the Proton acceptor in the catalytic mechanism. Acetyl-CoA-binding residues include Ala-384 and Lys-401.

The protein in the N-terminal section; belongs to the N-acetylglucosamine-1-phosphate uridyltransferase family. In the C-terminal section; belongs to the transferase hexapeptide repeat family.

It carries out the reaction N-acetyl-alpha-D-glucosamine 1-phosphate + UTP + H(+) = UDP-N-acetyl-alpha-D-glucosamine + diphosphate. It catalyses the reaction alpha-D-glucosamine 1-phosphate + acetyl-CoA = N-acetyl-alpha-D-glucosamine 1-phosphate + CoA + H(+). Its pathway is nucleotide-sugar biosynthesis; UDP-N-acetyl-alpha-D-glucosamine biosynthesis; N-acetyl-alpha-D-glucosamine 1-phosphate from alpha-D-glucosamine 6-phosphate (route II): step 2/2. The protein operates within nucleotide-sugar biosynthesis; UDP-N-acetyl-alpha-D-glucosamine biosynthesis; UDP-N-acetyl-alpha-D-glucosamine from N-acetyl-alpha-D-glucosamine 1-phosphate: step 1/1. In terms of biological role, catalyzes the last two sequential reactions in the de novo biosynthetic pathway for UDP-N-acetyl-glucosamine (UDP-GlcNAc). Responsible for the acetylation of GlcN-1-P to GlcNAc-1-P, and for the uridyl transfer from UTP to GlcNAc-1-P, to produce UDP-GlcNAc and pyrophosphate. The sequence is that of Bifunctional protein GlmU from Methanococcus maripaludis (strain C5 / ATCC BAA-1333).